A 169-amino-acid polypeptide reads, in one-letter code: Protein GrpE (169 aa).

Positions Met-1–Leu-25 are disordered. Residues Asn-7–Asn-23 are compositionally biased toward polar residues.

The protein belongs to the GrpE family. Homodimer.

Its subcellular location is the cytoplasm. Functionally, participates actively in the response to hyperosmotic and heat shock by preventing the aggregation of stress-denatured proteins, in association with DnaK and GrpE. It is the nucleotide exchange factor for DnaK and may function as a thermosensor. Unfolded proteins bind initially to DnaJ; upon interaction with the DnaJ-bound protein, DnaK hydrolyzes its bound ATP, resulting in the formation of a stable complex. GrpE releases ADP from DnaK; ATP binding to DnaK triggers the release of the substrate protein, thus completing the reaction cycle. Several rounds of ATP-dependent interactions between DnaJ, DnaK and GrpE are required for fully efficient folding. The protein is Protein GrpE of Campylobacter lari (strain RM2100 / D67 / ATCC BAA-1060).